The primary structure comprises 230 residues: Small ribosomal subunit protein uS3 (230 aa).

One can recognise a KH type-2 domain in the interval 39–107 (VRNYLFKKLI…PVHINIEEIK (69 aa)).

This sequence belongs to the universal ribosomal protein uS3 family. Part of the 30S ribosomal subunit. Forms a tight complex with proteins S10 and S14.

Binds the lower part of the 30S subunit head. Binds mRNA in the 70S ribosome, positioning it for translation. The polypeptide is Small ribosomal subunit protein uS3 (Vesicomyosocius okutanii subsp. Calyptogena okutanii (strain HA)).